Here is a 359-residue protein sequence, read N- to C-terminus: DNA replication and repair protein RecF (359 aa).

Residue 30 to 37 coordinates ATP; that stretch reads GPNGSGKT.

Belongs to the RecF family.

It localises to the cytoplasm. In terms of biological role, the RecF protein is involved in DNA metabolism; it is required for DNA replication and normal SOS inducibility. RecF binds preferentially to single-stranded, linear DNA. It also seems to bind ATP. This is DNA replication and repair protein RecF from Psychromonas ingrahamii (strain DSM 17664 / CCUG 51855 / 37).